The following is a 243-amino-acid chain: Biosynthetic peptidoglycan transglycosylase (243 aa).

Residues 21–43 (LLIVSLVSALMSVLQVIVFRFVD) traverse the membrane as a helical segment.

The protein belongs to the glycosyltransferase 51 family.

It is found in the cell inner membrane. It carries out the reaction [GlcNAc-(1-&gt;4)-Mur2Ac(oyl-L-Ala-gamma-D-Glu-L-Lys-D-Ala-D-Ala)](n)-di-trans,octa-cis-undecaprenyl diphosphate + beta-D-GlcNAc-(1-&gt;4)-Mur2Ac(oyl-L-Ala-gamma-D-Glu-L-Lys-D-Ala-D-Ala)-di-trans,octa-cis-undecaprenyl diphosphate = [GlcNAc-(1-&gt;4)-Mur2Ac(oyl-L-Ala-gamma-D-Glu-L-Lys-D-Ala-D-Ala)](n+1)-di-trans,octa-cis-undecaprenyl diphosphate + di-trans,octa-cis-undecaprenyl diphosphate + H(+). The protein operates within cell wall biogenesis; peptidoglycan biosynthesis. Functionally, peptidoglycan polymerase that catalyzes glycan chain elongation from lipid-linked precursors. The chain is Biosynthetic peptidoglycan transglycosylase from Xylella fastidiosa (strain Temecula1 / ATCC 700964).